Reading from the N-terminus, the 462-residue chain is L-seryl-tRNA(Sec) selenium transferase (462 aa).

An N6-(pyridoxal phosphate)lysine modification is found at Lys293.

It belongs to the SelA family. Requires pyridoxal 5'-phosphate as cofactor.

It localises to the cytoplasm. The catalysed reaction is L-seryl-tRNA(Sec) + selenophosphate + H(+) = L-selenocysteinyl-tRNA(Sec) + phosphate. It functions in the pathway aminoacyl-tRNA biosynthesis; selenocysteinyl-tRNA(Sec) biosynthesis; selenocysteinyl-tRNA(Sec) from L-seryl-tRNA(Sec) (bacterial route): step 1/1. Its function is as follows. Converts seryl-tRNA(Sec) to selenocysteinyl-tRNA(Sec) required for selenoprotein biosynthesis. The chain is L-seryl-tRNA(Sec) selenium transferase from Clostridium botulinum (strain ATCC 19397 / Type A).